The chain runs to 291 residues: Undecaprenyl-diphosphatase (291 aa).

Helical transmembrane passes span 1–21 (MLIL…LTEF), 48–68 (SAFT…AWVF), 99–119 (LHII…DDVI), 123–143 (LFSV…MIIA), 159–179 (INYF…WPGF), 200–220 (SDFT…LSLV), 236–256 (LGFL…LYLI), and 269–289 (IVLV…QGIT).

Belongs to the UppP family.

It localises to the cell membrane. The enzyme catalyses di-trans,octa-cis-undecaprenyl diphosphate + H2O = di-trans,octa-cis-undecaprenyl phosphate + phosphate + H(+). In terms of biological role, catalyzes the dephosphorylation of undecaprenyl diphosphate (UPP). Confers resistance to bacitracin. The protein is Undecaprenyl-diphosphatase of Staphylococcus saprophyticus subsp. saprophyticus (strain ATCC 15305 / DSM 20229 / NCIMB 8711 / NCTC 7292 / S-41).